The chain runs to 581 residues: Estrogen receptor (581 aa).

Residues 1–144 (MYPEDSRVSG…GFEMAKEMRF (144 aa)) are modulating. 2 disordered regions span residues 45–66 (APLD…SGPN) and 99–123 (RSSV…DSYS). Positions 56–66 (GSLQSLGSGPN) are enriched in polar residues. The segment at residues 142–217 (MRFCAVCSDY…VGMMKGGVRK (76 aa)) is a DNA-binding region (nuclear receptor). NR C4-type zinc fingers lie at residues 145-165 (CAVC…CEGC) and 181-200 (CPAT…CQAC). A hinge region spans residues 211-272 (MKGGVRKDRG…GGGKSSVISM (62 aa)). Residues 216-246 (RKDRGRVLRRDKRRTGTSDRDKASKGLEHRT) show a composition bias toward basic and acidic residues. The disordered stretch occupies residues 216–269 (RKDRGRVLRRDKRRTGTSDRDKASKGLEHRTAPPQDRRKHISSSAGGGGGKSSV). The 237-residue stretch at 273 to 509 (PPDQVLLLLR…DLLLEMLDAH (237 aa)) folds into the NR LBD domain. Residues 514-528 (PDRPAETWSQADREP) show a composition bias toward basic and acidic residues. The disordered stretch occupies residues 514–581 (PDRPAETWSQ…VHPHPMKPTE (68 aa)). The segment covering 572–581 (VHPHPMKPTE) has biased composition (basic residues).

Belongs to the nuclear hormone receptor family. NR3 subfamily. As to quaternary structure, binds DNA as a homodimer. Can form a heterodimer with ER-beta.

The protein localises to the nucleus. The steroid hormones and their receptors are involved in the regulation of eukaryotic gene expression and affect cellular proliferation and differentiation in target tissues. This chain is Estrogen receptor (esr1), found in Sparus aurata (Gilthead sea bream).